The primary structure comprises 107 residues: U1-lycotoxin-Ls1i (107 aa).

Residues 1–20 form the signal peptide; it reads MMKVLVVVALLVTLISYSSS. Positions 21–41 are excised as a propeptide; the sequence is EGIDDLEADELLSLMANEQTR. 4 disulfides stabilise this stretch: cysteine 44–cysteine 59, cysteine 51–cysteine 68, cysteine 58–cysteine 86, and cysteine 70–cysteine 84.

Belongs to the neurotoxin 19 (CSTX) family. 04 (U1-Lctx) subfamily. In terms of tissue distribution, expressed by the venom gland.

The protein resides in the secreted. This is U1-lycotoxin-Ls1i from Lycosa singoriensis (Wolf spider).